Consider the following 293-residue polypeptide: Lysosomal amino acid transporter 1 homolog (293 aa).

The Lumenal segment spans residues 1–37 (MVWRTLGASNFSTCPNGSVQWIWDVFGECAQDGWDEA). Residues Asn10 and Asn16 are each glycosylated (N-linked (GlcNAc...) asparagine). Positions 34 to 100 (WDEASVGLGL…LADQLPLQTY (67 aa)) constitute a PQ-loop 1 domain. Residues 38–58 (SVGLGLVSILCFAASTFPQYI) traverse the membrane as a helical segment. Residues 59 to 71 (KACKTGNMDQALS) are Cytoplasmic-facing. A helical membrane pass occupies residues 72-92 (LWFLLGWIGGDSCNLIGSFLA). At 93-96 (DQLP) the chain is on the lumenal side. A helical membrane pass occupies residues 97–117 (LQTYTAVYYVLADLMMLTLYF). Topologically, residues 118 to 127 (HYKFKKRPSP) are cytoplasmic. Residues 128–148 (LSAPINSVLLFILGTVCITPL) traverse the membrane as a helical segment. At 149–182 (LSSTDPVAVPREGFRGRTLLSVEPGNKPFTKKEV) the chain is on the lumenal side. A helical membrane pass occupies residues 183 to 203 (IGFVIGSASSLLYLLSRLPQI). Residues 191–243 (SSLLYLLSRLPQIRTNFIRQSTQGISYSLFALVMLGNTLYGLSVLLKNPEVGQ) form the PQ-loop 2 domain. The Cytoplasmic portion of the chain corresponds to 204 to 214 (RTNFIRQSTQG). A helical transmembrane segment spans residues 215-235 (ISYSLFALVMLGNTLYGLSVL). Topologically, residues 236–254 (LKNPEVGQSEGSYLLHHLP) are lumenal. Residues 255–275 (WLVGSLGVLLLDTIISIQFLV) traverse the membrane as a helical segment. The Cytoplasmic portion of the chain corresponds to 276-293 (YRSHETAAASEREPLLPS). A Di-leucine motif motif is present at residues 290–291 (LL).

This sequence belongs to the laat-1 family. As to expression, ubiquitously expressed.

The protein localises to the lysosome membrane. Its function is as follows. Amino acid transporter that specifically mediates the pH-dependent export of the cationic amino acids arginine, histidine and lysine from lysosomes. The polypeptide is Lysosomal amino acid transporter 1 homolog (Mus musculus (Mouse)).